The following is an 863-amino-acid chain: MQRRGALFGMPGGSGSRKMAAGDIGELLVPHMPTIRVPRSGDRVYKNECAFSYDSPNSEGGLYVCMNTFLAFGREHVERHFRKTGQSVYMHLKRHVREKVRGASGGALPKRRNSKMFLDLDTDDDLNSDDYEYEDEAKLVIFPDHYEIALPNIEELPALVTIACDAVLSSKSPYRKQDPDTWENELPVSKYANNLTQLDNGVRIPPSGWKCARCDLRENLWLNLTDGSVLCGKWFFDSSGGNGHALEHYRDTGYPLAVKLGTITPDGADVYSFQEEEAVLDPHLAKHLAHFGIDMLHMHGTENGLQDNDIKPRVSEWEVIQETGTKLKPMYGPGYTGLKNLGNSCYLSSVMQAIFSIPEFQRAYVGNLPRIFDYSPLDPTQDFNTQMTKLGHGLLSGQYSKPPVKSELIEQVMKEEHKPQQNGISPRMFKAFVSKSHPEFSSNRQQDAQEFFLHLVNLVERNRIGSENPSDVFRFLVEERIQCCQTRKVRYTERVDYLMQLPVAMEAATNKDELIAYELTRREAESNRRPLPELVRAKIPFSACLQAFSEPENVDDFWSSALQAKSAGVKTSRFASFPEYLVVQIKKFTFGLDWVPKKFDVSVDMPDLLDINHLRARGLQPGEEELPDISPPIVIPDDSKDRLMTQLIDPSDIDESSVMQLAEMGFPLEACRKAVYFTGNMGAEVAFNWIVVHMEEPDFAEPLTMPGYGGAASAGASVFGATGLDNQPPEETVAIITSMGFHRNQAIQALRATNSNLERALDWIFSHPEFEEDSDFVIEMENNANANIVSEAKPEGPRVKDGSGMYELFAFISHMGTSTMSGHYVCHIKKEGRWVIYNDHKVCASERPPKDLGYMYFYRRIPS.

Residue S114 is modified to Phosphoserine. Residue T122 is modified to Phosphothreonine. The UBP-type; degenerate zinc-finger motif lies at 187–295 (PVSKYANNLT…KHLAHFGIDM (109 aa)). The Zn(2+) site is built by C211, C214, C231, and H244. A Glycyl lysine isopeptide (Lys-Gly) (interchain with G-Cter in SUMO2) cross-link involves residue K311. The region spanning 336–861 (TGLKNLGNSC…LGYMYFYRRI (526 aa)) is the USP domain. Residue C345 is the Nucleophile of the active site. A Glycyl lysine isopeptide (Lys-Gly) (interchain with G-Cter in SUMO2) cross-link involves residue K405. UBA domains follow at residues 652–693 (DIDE…IVVH) and 727–767 (QPPE…IFSH). The Proton acceptor role is filled by H823.

This sequence belongs to the peptidase C19 family. Interacts with UFD1. Interacts (via UBA domains) with SIAH2 (when ubiquitinated). Interacts with BAG6; the interaction is direct and may mediate UBL4A deubiquitination. Interacts (via UBA 2 domain) with AMFR; the interaction is direct. Interacts with UBL4A; may be indirect via BAG6. Interacts with NEDD4.

The protein resides in the cytoplasm. It carries out the reaction Thiol-dependent hydrolysis of ester, thioester, amide, peptide and isopeptide bonds formed by the C-terminal Gly of ubiquitin (a 76-residue protein attached to proteins as an intracellular targeting signal).. With respect to regulation, specifically inhibited by spautin-1 (specific and potent autophagy inhibitor-1), a derivative of MBCQ that binds to USP13 and inhibits deubiquitinase activity. Regulated by PIK3C3/VPS34-containing complexes. The weak deubiquitinase activity in vitro suggests the existence of some mechanism that activates the enzyme. In terms of biological role, deubiquitinase that mediates deubiquitination of target proteins such as BECN1, MITF, SKP2 and USP10 and is involved in various processes such as autophagy, endoplasmic reticulum-associated degradation (ERAD), cell cycle progression or DNA damage response. Component of a regulatory loop that controls autophagy and p53/TP53 levels: mediates deubiquitination of BECN1, a key regulator of autophagy, leading to stabilize the PIK3C3/VPS34-containing complexes. Alternatively, forms with NEDD4 a deubiquitination complex, which subsequently stabilizes VPS34 to promote autophagy. Also deubiquitinates USP10, an essential regulator of p53/TP53 stability. In turn, PIK3C3/VPS34-containing complexes regulate USP13 stability, suggesting the existence of a regulatory system by which PIK3C3/VPS34-containing complexes regulate p53/TP53 protein levels via USP10 and USP13. Recruited by nuclear UFD1 and mediates deubiquitination of SKP2, thereby regulating endoplasmic reticulum-associated degradation (ERAD). Also regulates ERAD through the deubiquitination of UBL4A a component of the BAG6/BAT3 complex. Mediates stabilization of SIAH2 independently of deubiquitinase activity: binds ubiquitinated SIAH2 and acts by impairing SIAH2 autoubiquitination. Regulates the cell cycle progression by stabilizing cell cycle proteins such as SKP2 and AURKB. In addition, plays an important role in maintaining genomic stability and in DNA replication checkpoint activation via regulation of RAP80 and TOPBP1. Deubiquitinates the multifunctional protein HMGB1 and subsequently drives its nucleocytoplasmic localization and its secretion. Positively regulates type I and type II interferon signalings by deubiquitinating STAT1 but negatively regulates antiviral response by deubiquitinating STING1. This Bos taurus (Bovine) protein is Ubiquitin carboxyl-terminal hydrolase 13 (USP13).